Here is a 116-residue protein sequence, read N- to C-terminus: CDKN2AIP N-terminal-like protein (116 aa).

Met1 bears the N-acetylmethionine mark. Positions 24–116 (AEQFRSYSES…RSELMRKHQS (93 aa)) constitute an XRN2-binding (XTBD) domain.

It belongs to the CARF family. As to quaternary structure, interacts with XRN2; the interaction is direct.

In Mus musculus (Mouse), this protein is CDKN2AIP N-terminal-like protein (Cdkn2aipnl).